A 637-amino-acid chain; its full sequence is Epithelial sodium channel subunit alpha (637 aa).

The segment at 1-34 is disordered; it reads MGTASRGGSVKAEKMPEGEKTRQCKQETEQQQKE. Topologically, residues 1-76 are cytoplasmic; it reads MGTASRGGSV…VCSKKNKMKT (76 aa). The span at 11–34 shows a compositional bias: basic and acidic residues; that stretch reads KAEKMPEGEKTRQCKQETEQQQKE. The helical transmembrane segment at 77-97 threads the bilayer; sequence AFWSVLFILTFGLMYWQFGIL. Over 98–548 the chain is Extracellular; the sequence is YREYFSYPVN…NQWSLWFGSS (451 aa). 10 disulfide bridges follow: cysteine 125-cysteine 292, cysteine 217-cysteine 224, cysteine 269-cysteine 276, cysteine 380-cysteine 465, cysteine 402-cysteine 442, cysteine 402-cysteine 461, cysteine 406-cysteine 457, cysteine 415-cysteine 442, cysteine 415-cysteine 465, and cysteine 417-cysteine 431. A helical membrane pass occupies residues 549 to 569; the sequence is VLSVMELAELILDFTVITFIL. The Cytoplasmic segment spans residues 570–637; it reads AFRWFRSKQW…PSKDGETGLE (68 aa).

The protein belongs to the amiloride-sensitive sodium channel (TC 1.A.6) family. SCNN1A subfamily. As to quaternary structure, heterotrimer; containing an alpha/SCNN1A, a beta/SCNN1B and a gamma/SCNN1G subunit. As to expression, the long isoform has been found in cochlea, colon, and cartilage. The short isoform is only found in cochlea.

It is found in the apical cell membrane. The protein resides in the cell projection. Its subcellular location is the cilium. The protein localises to the cytoplasmic granule. It localises to the cytoplasm. It is found in the cytoplasmic vesicle. The protein resides in the secretory vesicle. Its subcellular location is the acrosome. The protein localises to the flagellum. The enzyme catalyses Na(+)(in) = Na(+)(out). With respect to regulation, originally identified and characterized by its inhibition by the diuretic drug amiloride. Functionally, this is one of the three pore-forming subunits of the heterotrimeric epithelial sodium channel (ENaC), a critical regulator of sodium balance and fluid homeostasis. ENaC operates in epithelial tissues, where it mediates the electrodiffusion of sodium ions from extracellular fluid through the apical membrane of cells, with water following osmotically. This is Epithelial sodium channel subunit alpha from Gallus gallus (Chicken).